A 443-amino-acid polypeptide reads, in one-letter code: Xaa-Pro dipeptidase (443 aa).

The Mn(2+) site is built by D246, D257, H339, E384, and E423.

This sequence belongs to the peptidase M24B family. Bacterial-type prolidase subfamily. Requires Mn(2+) as cofactor.

The enzyme catalyses Xaa-L-Pro dipeptide + H2O = an L-alpha-amino acid + L-proline. Splits dipeptides with a prolyl residue in the C-terminal position. This chain is Xaa-Pro dipeptidase, found in Cronobacter sakazakii (strain ATCC BAA-894) (Enterobacter sakazakii).